A 380-amino-acid polypeptide reads, in one-letter code: Sialidase-2 (380 aa).

The FRIP motif signature appears at Y20–P23. Positions 21 and 41 each coordinate substrate. The active-site Proton acceptor is D46. A BNR 1 repeat occupies V127 to S138. Positions 179 and 181 each coordinate substrate. A BNR 2 repeat occupies F197–R208. 3 residues coordinate substrate: E218, R237, and R304. Y334 serves as the catalytic Nucleophile. Residue E355 is part of the active site.

It belongs to the glycosyl hydrolase 33 family. Expressed in skeletal muscle, fetal liver and embryonic carcinoma cell line NT2-D1.

Its subcellular location is the cytoplasm. The protein resides in the cytosol. It catalyses the reaction Hydrolysis of alpha-(2-&gt;3)-, alpha-(2-&gt;6)-, alpha-(2-&gt;8)- glycosidic linkages of terminal sialic acid residues in oligosaccharides, glycoproteins, glycolipids, colominic acid and synthetic substrates.. The enzyme catalyses a ganglioside GD1a + H2O = a ganglioside GM1 + N-acetylneuraminate. The catalysed reaction is a ganglioside GM1 + H2O = a ganglioside GA1 + N-acetylneuraminate. It carries out the reaction a ganglioside GT1b + H2O = a ganglioside GD1b + N-acetylneuraminate. It catalyses the reaction a ganglioside GD1b + H2O = a ganglioside GM1 + N-acetylneuraminate. The enzyme catalyses a ganglioside GD3 + H2O = a ganglioside GM3 + N-acetylneuraminate. The catalysed reaction is a ganglioside GM3 + H2O = a beta-D-galactosyl-(1-&gt;4)-beta-D-glucosyl-(1&lt;-&gt;1)-ceramide + N-acetylneuraminate. It carries out the reaction a ganglioside GM2 + H2O = a ganglioside GA2 + N-acetylneuraminate. It catalyses the reaction a neolactoside IV(3)-alpha-NeuAc-nLc4Cer(d18:1(4E)) + H2O = a neolactoside nLc4Cer(d18:1(4E)) + N-acetylneuraminate. The enzyme catalyses N-acetyl-alpha-neuraminosyl-(2-&gt;3)-beta-D-galactosyl-(1-&gt;4)-D-glucose + H2O = lactose + N-acetylneuraminate. In terms of biological role, exo-alpha-sialidase that catalyzes the hydrolytic cleavage of the terminal sialic acid (N-acetylneuraminic acid, Neu5Ac) of a glycan moiety in the catabolism of glycolipids, glycoproteins and oligosacharides. Recognizes sialyl linkage positions of the glycan moiety as well as the supramolecular organization of the sialoglycoconjugate. Displays preference for alpha-(2-&gt;3)-sialylated GD1a and GT1B gangliosides over alpha-(2-&gt;8)-sialylated GD1b, in both monomeric forms and micelles. Hydrolyzes monomeric GM1 ganglioside, but has no activity toward the miscellar form. Has lower sialidase activity for glycoproteins such as fetuin and TF/transferrin that carry a mixture of alpha-(2-&gt;3) and alpha-(2-&gt;6)-sialyl linkages. Cleaves milk oligosaccharide alpha-(2-&gt;3)-sialyllactose, but is inactive toward alpha-(2-&gt;6)-sialyllactose isomer. Has no activity toward colominic acid, a homomer of alpha-(2-&gt;8)-linked Neu5Ac residues. This is Sialidase-2 (NEU2) from Homo sapiens (Human).